A 20-amino-acid chain; its full sequence is Protease inhibitor (20 aa).

In terms of assembly, monomer. In terms of processing, glycosylated. As to expression, stored in epidermis and secreted into the hemolymph and cuticle. Not detected in the interior of the epidermis, fat body cells or columnar or goblet cells of the midgut epithelium (at protein level).

In terms of biological role, inhibits trypsin and chymotrypsin. This Antheraea mylitta (Tasar silkworm) protein is Protease inhibitor.